The primary structure comprises 79 residues: Conotoxin ArMKLT2-031 (79 aa).

The signal sequence occupies residues 1–22; that stretch reads MKLTCVLIIAVLFLTACQLTTG. Residues 23-46 constitute a propeptide that is removed on maturation; it reads ETYSRGEQKDHALRSTDKNSKLTR. A Pyrrolidone carboxylic acid modification is found at Q47. Disulfide bonds link C48–C62, C55–C66, and C61–C73.

It belongs to the conotoxin O1 superfamily. Expressed by the venom duct.

It is found in the secreted. In Conus arenatus (Sand-dusted cone), this protein is Conotoxin ArMKLT2-031.